Here is a 621-residue protein sequence, read N- to C-terminus: 1-deoxy-D-xylulose-5-phosphate synthase (621 aa).

Thiamine diphosphate-binding positions include His80 and 121-123 (GHS). Asp152 lines the Mg(2+) pocket. Residues 153–154 (GA), Asn181, Tyr288, and Glu371 each bind thiamine diphosphate. Asn181 is a Mg(2+) binding site.

This sequence belongs to the transketolase family. DXPS subfamily. As to quaternary structure, homodimer. Requires Mg(2+) as cofactor. It depends on thiamine diphosphate as a cofactor.

It carries out the reaction D-glyceraldehyde 3-phosphate + pyruvate + H(+) = 1-deoxy-D-xylulose 5-phosphate + CO2. The protein operates within metabolic intermediate biosynthesis; 1-deoxy-D-xylulose 5-phosphate biosynthesis; 1-deoxy-D-xylulose 5-phosphate from D-glyceraldehyde 3-phosphate and pyruvate: step 1/1. In terms of biological role, catalyzes the acyloin condensation reaction between C atoms 2 and 3 of pyruvate and glyceraldehyde 3-phosphate to yield 1-deoxy-D-xylulose-5-phosphate (DXP). The protein is 1-deoxy-D-xylulose-5-phosphate synthase of Pectobacterium atrosepticum (strain SCRI 1043 / ATCC BAA-672) (Erwinia carotovora subsp. atroseptica).